Reading from the N-terminus, the 210-residue chain is Adenylate kinase (210 aa).

10-15 (GSGKGT) is a binding site for ATP. An NMP region spans residues 28-57 (SVGKVLRTVMESNTAEADVVKKFIKSGKLV). Residues R34, 55 to 57 (KLV), 83 to 86 (GYPR), and Q90 contribute to the AMP site. The segment at 120-158 (GRISCTDCGTIYNKLYCMPKINGVCDICNSSSFQNRVDD) is LID. Residue R121 coordinates ATP. Positions 124 and 127 each coordinate Zn(2+). 130–131 (IY) provides a ligand contact to ATP. Residues C144 and C147 each coordinate Zn(2+). Positions 155 and 166 each coordinate AMP. Residue Q194 coordinates ATP.

This sequence belongs to the adenylate kinase family. As to quaternary structure, monomer.

Its subcellular location is the cytoplasm. The enzyme catalyses AMP + ATP = 2 ADP. Its pathway is purine metabolism; AMP biosynthesis via salvage pathway; AMP from ADP: step 1/1. Its function is as follows. Catalyzes the reversible transfer of the terminal phosphate group between ATP and AMP. Plays an important role in cellular energy homeostasis and in adenine nucleotide metabolism. The chain is Adenylate kinase from Orientia tsutsugamushi (strain Boryong) (Rickettsia tsutsugamushi).